Consider the following 309-residue polypeptide: Tagatose-6-phosphate kinase (309 aa).

This sequence belongs to the carbohydrate kinase PfkB family. LacC subfamily.

It catalyses the reaction D-tagatofuranose 6-phosphate + ATP = D-tagatofuranose 1,6-bisphosphate + ADP + H(+). It functions in the pathway carbohydrate metabolism; D-tagatose 6-phosphate degradation; D-glyceraldehyde 3-phosphate and glycerone phosphate from D-tagatose 6-phosphate: step 1/2. The sequence is that of Tagatose-6-phosphate kinase from Streptococcus pneumoniae (strain 70585).